We begin with the raw amino-acid sequence, 287 residues long: Acetylglutamate kinase (287 aa).

Substrate is bound by residues 64 to 65 (GG), Arg86, and Asn185.

This sequence belongs to the acetylglutamate kinase family. ArgB subfamily.

It localises to the cytoplasm. The catalysed reaction is N-acetyl-L-glutamate + ATP = N-acetyl-L-glutamyl 5-phosphate + ADP. It participates in amino-acid biosynthesis; L-arginine biosynthesis; N(2)-acetyl-L-ornithine from L-glutamate: step 2/4. In terms of biological role, catalyzes the ATP-dependent phosphorylation of N-acetyl-L-glutamate. The chain is Acetylglutamate kinase from Hydrogenobaculum sp. (strain Y04AAS1).